Here is a 98-residue protein sequence, read N- to C-terminus: NADH-ubiquinone oxidoreductase chain 4L (98 aa).

3 helical membrane-spanning segments follow: residues 2–22 (QMTM…LLMF), 26–46 (FMSS…LMSI), and 59–79 (FPLV…SLLV).

This sequence belongs to the complex I subunit 4L family. As to quaternary structure, core subunit of respiratory chain NADH dehydrogenase (Complex I) which is composed of 45 different subunits.

Its subcellular location is the mitochondrion inner membrane. It catalyses the reaction a ubiquinone + NADH + 5 H(+)(in) = a ubiquinol + NAD(+) + 4 H(+)(out). Its function is as follows. Core subunit of the mitochondrial membrane respiratory chain NADH dehydrogenase (Complex I) which catalyzes electron transfer from NADH through the respiratory chain, using ubiquinone as an electron acceptor. Part of the enzyme membrane arm which is embedded in the lipid bilayer and involved in proton translocation. The sequence is that of NADH-ubiquinone oxidoreductase chain 4L (MT-ND4L) from Echinosorex gymnura (Moon rat).